Consider the following 558-residue polypeptide: Probable beta-glucosidase btgE (558 aa).

An N-terminal signal peptide occupies residues 1–18; sequence MKAAILATAAALTGSALA. 2 disordered regions span residues 64 to 105 and 251 to 305; these read STPS…PETP and LPSS…QMGM. 2 stretches are compositionally biased toward low complexity: residues 76-105 and 252-292; these read PETT…PETP and PSSS…SSSA. Over residues 293–305 the composition is skewed to polar residues; that stretch reads EVPQTTGSGQMGM. Glu399 functions as the Proton donor in the catalytic mechanism. Residue Glu495 is the Nucleophile of the active site.

It belongs to the glycosyl hydrolase 17 family.

The protein resides in the secreted. It localises to the cell wall. The catalysed reaction is Hydrolysis of terminal, non-reducing beta-D-glucosyl residues with release of beta-D-glucose.. Its pathway is glycan metabolism; cellulose degradation. In terms of biological role, beta-glucosidases are one of a number of cellulolytic enzymes involved in the degradation of cellulosic biomass. Catalyzes the last step releasing glucose from the inhibitory cellobiose. This is Probable beta-glucosidase btgE (btgE) from Aspergillus terreus (strain NIH 2624 / FGSC A1156).